A 295-amino-acid polypeptide reads, in one-letter code: Glycine N-phenylacetyltransferase (295 aa).

Residue Lys-43 is modified to N6-acetyllysine. At Lys-48 the chain carries N6-acetyllysine; alternate. Lys-48 bears the N6-succinyllysine; alternate mark. Lys-80 carries the N6-acetyllysine modification. Lys-182 is modified (N6-acetyllysine; alternate). Lys-182 is modified (N6-succinyllysine; alternate).

It belongs to the glycine N-acyltransferase family.

The protein localises to the mitochondrion. The enzyme catalyses phenylacetyl-CoA + glycine = phenylacetylglycine + CoA + H(+). In terms of biological role, mitochondrial acyltransferase which transfers the acyl group to the N-terminus of glycine. Can conjugate a multitude of substrates to form a variety of N-acylglycines. Catalyzes the conjugation of arylacetic acids with glycine but does not have activity towards any alkyl-CoA. The protein is Glycine N-phenylacetyltransferase of Bos taurus (Bovine).